A 171-amino-acid chain; its full sequence is Bursicon (171 aa).

The signal sequence occupies residues 1-31 (MISSPSTPATFAAGSLVLLCLVLGGGHFALA). Cystine bridges form between Cys47–Cys96, Cys61–Cys110, Cys71–Cys131, Cys75–Cys133, and Cys93–Cys136. Residues 47 to 137 (CQVTPVIHVL…PLECMCRPCT (91 aa)) form the CTCK domain.

Heterodimer of burs and pburs.

The protein resides in the secreted. In terms of biological role, final heterodimeric neurohormone released at the end of the molting cycle, involved in the sclerotization (tanning) of the insect cuticle, melanization and wing spreading. The polypeptide is Bursicon (Culex pipiens pipiens (Northern house mosquito)).